Reading from the N-terminus, the 446-residue chain is Tubulin beta-1 chain (446 aa).

8 residues coordinate GTP: Gln11, Glu69, Ser138, Gly142, Thr143, Gly144, Asn204, and Asn226. Glu69 serves as a coordination point for Mg(2+).

It belongs to the tubulin family. In terms of assembly, dimer of alpha and beta chains. A typical microtubule is a hollow water-filled tube with an outer diameter of 25 nm and an inner diameter of 15 nM. Alpha-beta heterodimers associate head-to-tail to form protofilaments running lengthwise along the microtubule wall with the beta-tubulin subunit facing the microtubule plus end conferring a structural polarity. Microtubules usually have 13 protofilaments but different protofilament numbers can be found in some organisms and specialized cells. Mg(2+) serves as cofactor.

The protein localises to the cytoplasm. It localises to the cytoskeleton. Tubulin is the major constituent of microtubules, a cylinder consisting of laterally associated linear protofilaments composed of alpha- and beta-tubulin heterodimers. Microtubules grow by the addition of GTP-tubulin dimers to the microtubule end, where a stabilizing cap forms. Below the cap, tubulin dimers are in GDP-bound state, owing to GTPase activity of alpha-tubulin. This is Tubulin beta-1 chain (TUBB1) from Suillus bovinus (Jersey cow bolete).